Here is an 861-residue protein sequence, read N- to C-terminus: Rod cGMP-specific 3',5'-cyclic phosphodiesterase subunit alpha (861 aa).

At Gly2 the chain carries N-acetylglycine. 2 consecutive GAF domains span residues 73-222 (QAER…NLIM) and 254-431 (DIER…GWSV). The 334-residue stretch at 483 to 816 (EEEELAEILQ…KEWKALADEY (334 aa)) folds into the PDEase domain. His559 serves as the catalytic Proton donor. His563, His599, Asp600, and Asp720 together coordinate a divalent metal cation. The segment at 821–861 (KALEEEKQKQQTAKQGAAGDQPGGNPSPAGGAPASKSCCIQ) is disordered. The segment covering 830 to 861 (QQTAKQGAAGDQPGGNPSPAGGAPASKSCCIQ) has biased composition (low complexity). A Cysteine methyl ester modification is found at Cys858. Cys858 carries the S-farnesyl cysteine lipid modification. Positions 859 to 861 (CIQ) are cleaved as a propeptide — removed in mature form.

This sequence belongs to the cyclic nucleotide phosphodiesterase family. As to quaternary structure, oligomer composed of two catalytic chains (alpha and beta), an inhibitory chain (gamma) and the delta chain. A divalent metal cation is required as a cofactor.

It localises to the cell membrane. The protein resides in the cell projection. It is found in the cilium. The protein localises to the photoreceptor outer segment. The catalysed reaction is 3',5'-cyclic GMP + H2O = GMP + H(+). Its function is as follows. Rod-specific cGMP phosphodiesterase that catalyzes the hydrolysis of 3',5'-cyclic GMP. This protein participates in processes of transmission and amplification of the visual signal. The polypeptide is Rod cGMP-specific 3',5'-cyclic phosphodiesterase subunit alpha (Canis lupus familiaris (Dog)).